Here is a 41-residue protein sequence, read N- to C-terminus: Large ribosomal subunit protein bL36 (41 aa).

Belongs to the bacterial ribosomal protein bL36 family.

The chain is Large ribosomal subunit protein bL36 from Chelativorans sp. (strain BNC1).